The primary structure comprises 227 residues: Ion-translocating oxidoreductase complex subunit E (227 aa).

Transmembrane regions (helical) follow at residues 57-77 (LGLGLATLFVLLCTNVTISLF), 89-109 (IYVMVIATVVTAVQLLMNAFA), 111-131 (PVYQSLGIFIPLIVTNCIVIG), 146-166 (AFDGLATGLGMTLSLVLLGAI), and 200-220 (GLLLAILPPGAFIGLGLILAV).

The protein belongs to the NqrDE/RnfAE family. As to quaternary structure, the complex is composed of six subunits: RnfA, RnfB, RnfC, RnfD, RnfE and RnfG.

It localises to the cell inner membrane. In terms of biological role, part of a membrane-bound complex that couples electron transfer with translocation of ions across the membrane. The polypeptide is Ion-translocating oxidoreductase complex subunit E (Haemophilus ducreyi (strain 35000HP / ATCC 700724)).